The primary structure comprises 118 residues: Ly-6/neurotoxin-like protein 1 (118 aa).

The N-terminal stretch at 1-22 (MTPLLTLFLVVLMGLPLAPVQA) is a signal peptide. Residues 23–107 (LDCHVCAYNG…LAIPATLALA (85 aa)) enclose the UPAR/Ly6 domain. 5 cysteine pairs are disulfide-bonded: Cys-25–Cys-48, Cys-28–Cys-35, Cys-41–Cys-66, Cys-70–Cys-87, and Cys-88–Cys-93. Residue Ser-95 is the site of GPI-anchor amidated serine attachment. Positions 96 to 118 (AGLAIPATLALAPVLLATLWGLL) are cleaved as a propeptide — removed in mature form.

In terms of assembly, interacts with nAChRs containing alpha-4:beta-2 (CHRNA4:CHRNB2) and alpha-7 (CHRNA7) subunits. Interacts with CHRNA4 probably in the endoplasmic reticulum prior to nAChR pentameric assembly. Interacts with KCNA2/Potassium voltage-gated channel subfamily A member 2. As to expression, expressed in lung predominantly in airway epithelial cells, submucous glands, and smooth muscle cells, in endothelial and smooth muscle cells in vessel walls and in alveolar type II cells (at protein level). Also expressed in brain.

It localises to the cell membrane. Its subcellular location is the cell projection. It is found in the dendrite. The protein localises to the endoplasmic reticulum. In terms of biological role, acts in different tissues through interaction to nicotinic acetylcholine receptors (nAChRs). The proposed role as modulator of nAChR activity seems to be dependent on the nAChR subtype and stoichiometry, and to involve an effect on nAChR trafficking and its cell surface expression, and on single channel properties of the nAChR inserted in the plasma membrane. Modulates functional properties of nicotinic acetylcholine receptors (nAChRs) to prevent excessive excitation, and hence neurodegeneration. Enhances desensitization by increasing both the rate and extent of desensitization of alpha-4:beta-2-containing nAChRs and slowing recovery from desensitization. Promotes large amplitude ACh-evoked currents through alpha-4:beta-2 nAChRs. Is involved in regulation of the nAChR pentameric assembly in the endoplasmic reticulum. Shifts stoichiometry from high sensitivity alpha-4(2):beta-2(3) to low sensitivity alpha-4(3):beta-2(2) nAChR. In vitro modulates alpha-3:beta-4-containing nAChRs. Reduces cell surface expression of (alpha-3:beta-4)(2):beta-4 and (alpha-3:beta-4)(2):alpha-5 nAChRs suggesting an interaction with nAChR alpha-3(-):(+)beta-4 subunit interfaces and an allosteric mode. Corresponding single channel effects characterized by decreased unitary conductance, altered burst proportions and enhanced desensitization/inactivation seem to depend on nAChR alpha:alpha subunit interfaces and are greater in (alpha-3:beta-2)(2):alpha-3 when compared to (alpha-3:beta-2)(2):alpha-5 nAChRs. Prevents plasticity in the primary visual cortex late in life. This Macaca mulatta (Rhesus macaque) protein is Ly-6/neurotoxin-like protein 1.